A 134-amino-acid chain; its full sequence is Large ribosomal subunit protein bL20 (134 aa).

Belongs to the bacterial ribosomal protein bL20 family.

Its function is as follows. Binds directly to 23S ribosomal RNA and is necessary for the in vitro assembly process of the 50S ribosomal subunit. It is not involved in the protein synthesizing functions of that subunit. In Sinorhizobium fredii (strain NBRC 101917 / NGR234), this protein is Large ribosomal subunit protein bL20.